Here is a 269-residue protein sequence, read N- to C-terminus: Formamidopyrimidine-DNA glycosylase (269 aa).

Pro-2 functions as the Schiff-base intermediate with DNA in the catalytic mechanism. Glu-3 functions as the Proton donor in the catalytic mechanism. Lys-57 (proton donor; for beta-elimination activity) is an active-site residue. The DNA site is built by His-90, Arg-109, and Lys-150. An FPG-type zinc finger spans residues 235–269 (LVYGKAGEPCPECGEPLQELKIGQRNTFFCNECQQ). Catalysis depends on Arg-259, which acts as the Proton donor; for delta-elimination activity.

It belongs to the FPG family. In terms of assembly, monomer. It depends on Zn(2+) as a cofactor.

It carries out the reaction Hydrolysis of DNA containing ring-opened 7-methylguanine residues, releasing 2,6-diamino-4-hydroxy-5-(N-methyl)formamidopyrimidine.. The catalysed reaction is 2'-deoxyribonucleotide-(2'-deoxyribose 5'-phosphate)-2'-deoxyribonucleotide-DNA = a 3'-end 2'-deoxyribonucleotide-(2,3-dehydro-2,3-deoxyribose 5'-phosphate)-DNA + a 5'-end 5'-phospho-2'-deoxyribonucleoside-DNA + H(+). Involved in base excision repair of DNA damaged by oxidation or by mutagenic agents. Acts as a DNA glycosylase that recognizes and removes damaged bases. Has a preference for oxidized purines, such as 7,8-dihydro-8-oxoguanine (8-oxoG). Has AP (apurinic/apyrimidinic) lyase activity and introduces nicks in the DNA strand. Cleaves the DNA backbone by beta-delta elimination to generate a single-strand break at the site of the removed base with both 3'- and 5'-phosphates. This is Formamidopyrimidine-DNA glycosylase from Vibrio parahaemolyticus serotype O3:K6 (strain RIMD 2210633).